Here is a 644-residue protein sequence, read N- to C-terminus: uncharacterized protein (644 aa).

A disordered region spans residues 65 to 117; that stretch reads DSDVETTGGGGRGSTTSTEDRIDEHDDAIEDDGVSNEEDENQDAEQEQEVDLN. The span at 89 to 114 shows a compositional bias: acidic residues; sequence HDDAIEDDGVSNEEDENQDAEQEQEV.

This is an uncharacterized protein from Arabidopsis thaliana (Mouse-ear cress).